The chain runs to 244 residues: tRNA1(Val) (adenine(37)-N6)-methyltransferase (244 aa).

The protein belongs to the methyltransferase superfamily. tRNA (adenine-N(6)-)-methyltransferase family.

The protein localises to the cytoplasm. The enzyme catalyses adenosine(37) in tRNA1(Val) + S-adenosyl-L-methionine = N(6)-methyladenosine(37) in tRNA1(Val) + S-adenosyl-L-homocysteine + H(+). Specifically methylates the adenine in position 37 of tRNA(1)(Val) (anticodon cmo5UAC). The sequence is that of tRNA1(Val) (adenine(37)-N6)-methyltransferase from Shewanella sediminis (strain HAW-EB3).